The chain runs to 311 residues: 4-hydroxy-tetrahydrodipicolinate synthase (311 aa).

Residue threonine 51 coordinates pyruvate. Catalysis depends on tyrosine 140, which acts as the Proton donor/acceptor. Catalysis depends on lysine 168, which acts as the Schiff-base intermediate with substrate. Position 209 (isoleucine 209) interacts with pyruvate.

This sequence belongs to the DapA family. In terms of assembly, homotetramer; dimer of dimers.

The protein resides in the cytoplasm. It carries out the reaction L-aspartate 4-semialdehyde + pyruvate = (2S,4S)-4-hydroxy-2,3,4,5-tetrahydrodipicolinate + H2O + H(+). It functions in the pathway amino-acid biosynthesis; L-lysine biosynthesis via DAP pathway; (S)-tetrahydrodipicolinate from L-aspartate: step 3/4. In terms of biological role, catalyzes the condensation of (S)-aspartate-beta-semialdehyde [(S)-ASA] and pyruvate to 4-hydroxy-tetrahydrodipicolinate (HTPA). The protein is 4-hydroxy-tetrahydrodipicolinate synthase of Streptococcus pneumoniae (strain ATCC BAA-255 / R6).